A 458-amino-acid polypeptide reads, in one-letter code: 5'-adenylylsulfate reductase 3, chloroplastic (458 aa).

The interval 1–24 is disordered; it reads MALAINVSSSSSSAISSSSFPSSD. The transit peptide at 1 to 69 directs the protein to the chloroplast; sequence MALAINVSSS…VQSITKESIV (69 aa). The span at 8–23 shows a compositional bias: low complexity; sequence SSSSSSAISSSSFPSS. Residues 70–319 form a reductase domain region; sequence ASEVTEKLDV…KAKECGLHKG (250 aa). In terms of domain architecture, Thioredoxin spans 337-458; sequence ASVADIFNSE…SLTSFLNLVR (122 aa). Catalysis depends on nucleophile residues C378 and C381. A disulfide bridge connects residues C378 and C381.

The protein belongs to the APS reductase family. [4Fe-4S] cluster serves as cofactor. Leaves, roots and stem.

It localises to the plastid. It is found in the chloroplast. It catalyses the reaction glutathione disulfide + sulfite + AMP + 2 H(+) = adenosine 5'-phosphosulfate + 2 glutathione. Stimulated by sodium sulfate &gt; ammonium sulfate. In terms of biological role, reduces sulfate for Cys biosynthesis. Substrate preference is adenosine-5'-phosphosulfate (APS) &gt;&gt; 3'-phosphoadenosine-5'-phosphosulfate (PAPS). Uses glutathione or DTT as source of protons. The polypeptide is 5'-adenylylsulfate reductase 3, chloroplastic (APR3) (Arabidopsis thaliana (Mouse-ear cress)).